Consider the following 241-residue polypeptide: MFLTRSEYDRGVNTFSPEGRLFQVEYAIEAIKLGSTAIGIQTSEGVCLAVEKRITSPLMEPSSIEKIVEIDAHIGCAMSGLIADAKTLIDKARVETQNHWFTYNETMTVESVTQAVSNLALQFGEEDADPGAMSRPFGVALLFGGVDEKGPQLFHMDPSGTFVQCDARAIGSASEGAQSSLQEVYHKSMTLKEAIKSSLIILKQVMEEKLNATNIELATVQPGQNFHMFTKEELEEVIKDI.

Methionine 1 is modified (N-acetylmethionine). Serine 16 is subject to Phosphoserine. Threonine 55 carries the post-translational modification Phosphothreonine. Phosphoserine occurs at positions 56 and 63. O-linked (GlcNAc) serine glycosylation is present at serine 198.

Belongs to the peptidase T1A family. In terms of assembly, the 26S proteasome consists of a 20S proteasome core and two 19S regulatory subunits. The 20S proteasome core is a barrel-shaped complex made of 28 subunits that are arranged in four stacked rings. The two outer rings are each formed by seven alpha subunits, and the two inner rings are formed by seven beta subunits. The proteolytic activity is exerted by three beta-subunits PSMB5, PSMB6 and PSMB7. PSMA5 interacts directly with the PSMG1-PSMG2 heterodimer which promotes 20S proteasome assembly.

It localises to the cytoplasm. Its subcellular location is the nucleus. Its function is as follows. Component of the 20S core proteasome complex involved in the proteolytic degradation of most intracellular proteins. This complex plays numerous essential roles within the cell by associating with different regulatory particles. Associated with two 19S regulatory particles, forms the 26S proteasome and thus participates in the ATP-dependent degradation of ubiquitinated proteins. The 26S proteasome plays a key role in the maintenance of protein homeostasis by removing misfolded or damaged proteins that could impair cellular functions, and by removing proteins whose functions are no longer required. Associated with the PA200 or PA28, the 20S proteasome mediates ubiquitin-independent protein degradation. This type of proteolysis is required in several pathways including spermatogenesis (20S-PA200 complex) or generation of a subset of MHC class I-presented antigenic peptides (20S-PA28 complex). In Bos taurus (Bovine), this protein is Proteasome subunit alpha type-5 (PSMA5).